The primary structure comprises 125 residues: NADPH-dependent 7-cyano-7-deazaguanine reductase (125 aa).

Cys41 serves as the catalytic Thioimide intermediate. The active-site Proton donor is Asp48. Substrate contacts are provided by residues 63-65 (VEL) and 82-83 (HE).

It belongs to the GTP cyclohydrolase I family. QueF type 1 subfamily.

It localises to the cytoplasm. The catalysed reaction is 7-aminomethyl-7-carbaguanine + 2 NADP(+) = 7-cyano-7-deazaguanine + 2 NADPH + 3 H(+). It participates in tRNA modification; tRNA-queuosine biosynthesis. Catalyzes the NADPH-dependent reduction of 7-cyano-7-deazaguanine (preQ0) to 7-aminomethyl-7-deazaguanine (preQ1). The sequence is that of NADPH-dependent 7-cyano-7-deazaguanine reductase from Sulfurimonas denitrificans (strain ATCC 33889 / DSM 1251) (Thiomicrospira denitrificans (strain ATCC 33889 / DSM 1251)).